The chain runs to 393 residues: Formate-dependent phosphoribosylglycinamide formyltransferase (393 aa).

N(1)-(5-phospho-beta-D-ribosyl)glycinamide is bound by residues 22 to 23 and Glu82; that span reads EL. Residues Arg114, Lys155, 160-165, 195-198, and Glu203 each bind ATP; these read SSGKGQ and EGFV. In terms of domain architecture, ATP-grasp spans 119–308; that stretch reads RLAAEELGLP…EFALHARAIL (190 aa). The Mg(2+) site is built by Glu267 and Glu279. Residues Asp286, Lys356, and 363-364 contribute to the N(1)-(5-phospho-beta-D-ribosyl)glycinamide site; that span reads RR.

The protein belongs to the PurK/PurT family. In terms of assembly, homodimer.

The enzyme catalyses N(1)-(5-phospho-beta-D-ribosyl)glycinamide + formate + ATP = N(2)-formyl-N(1)-(5-phospho-beta-D-ribosyl)glycinamide + ADP + phosphate + H(+). It participates in purine metabolism; IMP biosynthesis via de novo pathway; N(2)-formyl-N(1)-(5-phospho-D-ribosyl)glycinamide from N(1)-(5-phospho-D-ribosyl)glycinamide (formate route): step 1/1. Its function is as follows. Involved in the de novo purine biosynthesis. Catalyzes the transfer of formate to 5-phospho-ribosyl-glycinamide (GAR), producing 5-phospho-ribosyl-N-formylglycinamide (FGAR). Formate is provided by PurU via hydrolysis of 10-formyl-tetrahydrofolate. This Nitratidesulfovibrio vulgaris (strain DSM 19637 / Miyazaki F) (Desulfovibrio vulgaris) protein is Formate-dependent phosphoribosylglycinamide formyltransferase.